The following is a 490-amino-acid chain: Acetyl-coenzyme A carboxylase carboxyl transferase subunit beta, chloroplastic (490 aa).

A disordered region spans residues 184-203; that stretch reads LNSSENEGSSRRTRTKGSDL. The 270-residue stretch at 221 to 490 folds into the CoA carboxyltransferase N-terminal domain; that stretch reads LWVQCENCYG…PLNQKSSKIK (270 aa). Residues C225, C228, C244, and C247 each coordinate Zn(2+). A C4-type zinc finger spans residues 225-247; that stretch reads CENCYGLNYKKFLKSKMNICEQC.

This sequence belongs to the AccD/PCCB family. Acetyl-CoA carboxylase is a heterohexamer composed of biotin carboxyl carrier protein, biotin carboxylase and 2 subunits each of ACCase subunit alpha and ACCase plastid-coded subunit beta (accD). Zn(2+) is required as a cofactor. As to expression, RNA expressed in leaf, root, stem, and tuber; the least expression occurs in stems. RNA persists even in senescent leaves.

Its subcellular location is the plastid. The protein localises to the chloroplast stroma. It catalyses the reaction N(6)-carboxybiotinyl-L-lysyl-[protein] + acetyl-CoA = N(6)-biotinyl-L-lysyl-[protein] + malonyl-CoA. It participates in lipid metabolism; malonyl-CoA biosynthesis; malonyl-CoA from acetyl-CoA: step 1/1. In terms of biological role, component of the acetyl coenzyme A carboxylase (ACC) complex. Biotin carboxylase (BC) catalyzes the carboxylation of biotin on its carrier protein (BCCP) and then the CO(2) group is transferred by the transcarboxylase to acetyl-CoA to form malonyl-CoA. The polypeptide is Acetyl-coenzyme A carboxylase carboxyl transferase subunit beta, chloroplastic (Solanum tuberosum (Potato)).